A 176-amino-acid chain; its full sequence is MKAGSFYKLGLLVASAVLVAACSKTPGSADGGAAVGDGDATAQGLGQMTHFAGQEPGESYTTQAPHNQLYLFAYDDSTLASKYLPSVNAQAEYLKTHPGARVMIAGHTDERGSREYNVALGERRADTVAEILRMAGVSRQQIRVVSYGKERPANYGHDEASHAQNRRVEFIYEATR.

Residues 1 to 21 form the signal peptide; it reads MKAGSFYKLGLLVASAVLVAA. C22 carries the N-palmitoyl cysteine lipid modification. C22 carries S-diacylglycerol cysteine lipidation. The OmpA-like domain occupies 60–176; it reads YTTQAPHNQL…RVEFIYEATR (117 aa).

Belongs to the Pal lipoprotein family. As to quaternary structure, the Tol-Pal system is composed of five core proteins: the inner membrane proteins TolA, TolQ and TolR, the periplasmic protein TolB and the outer membrane protein Pal. They form a network linking the inner and outer membranes and the peptidoglycan layer.

It localises to the cell outer membrane. Its function is as follows. Part of the Tol-Pal system, which plays a role in outer membrane invagination during cell division and is important for maintaining outer membrane integrity. Very strongly associated with the peptidoglycan. In Legionella pneumophila, this protein is Peptidoglycan-associated lipoprotein.